The sequence spans 233 residues: 2-C-methyl-D-erythritol 4-phosphate cytidylyltransferase (233 aa).

It belongs to the IspD/TarI cytidylyltransferase family. IspD subfamily.

It catalyses the reaction 2-C-methyl-D-erythritol 4-phosphate + CTP + H(+) = 4-CDP-2-C-methyl-D-erythritol + diphosphate. It functions in the pathway isoprenoid biosynthesis; isopentenyl diphosphate biosynthesis via DXP pathway; isopentenyl diphosphate from 1-deoxy-D-xylulose 5-phosphate: step 2/6. Catalyzes the formation of 4-diphosphocytidyl-2-C-methyl-D-erythritol from CTP and 2-C-methyl-D-erythritol 4-phosphate (MEP). The polypeptide is 2-C-methyl-D-erythritol 4-phosphate cytidylyltransferase (Thiobacillus denitrificans (strain ATCC 25259 / T1)).